An 885-amino-acid polypeptide reads, in one-letter code: Initiator protein NS1 (885 aa).

The interval 404-477 is disordered; the sequence is AEAGPSGTQP…GREDIFSGAP (74 aa). Positions 409–423 are enriched in polar residues; it reads SGTQPVETAQQSPPT. Gly residues predominate over residues 452-465; it reads QAAGGSEMGAGGSA.

It belongs to the parvoviruses initiator protein NS1 family. As to quaternary structure, homooligomer. Requires Mg(2+) as cofactor.

Its subcellular location is the host nucleus. The catalysed reaction is ATP + H2O = ADP + phosphate + H(+). Functionally, multifunctional protein which displays endonuclease and helicase activities required for initiating and directing viral DNA replication. Also plays a role in viral packaging and transactivation of several promoters. Binds site-specifically to 2-3 approximate tandem copies within the origins of replication (Ori), unwinds this hairpin region and nicks one DNA strand thereby initiating the rolling circle replication (RCR). The protein is Initiator protein NS1 of Bombyx mori densovirus (BmDNV).